We begin with the raw amino-acid sequence, 270 residues long: Putative phosphoenolpyruvate synthase regulatory protein (270 aa).

150–157 (GVSRCGKT) is a binding site for ADP.

This sequence belongs to the pyruvate, phosphate/water dikinase regulatory protein family. PSRP subfamily.

The catalysed reaction is [pyruvate, water dikinase] + ADP = [pyruvate, water dikinase]-phosphate + AMP + H(+). It catalyses the reaction [pyruvate, water dikinase]-phosphate + phosphate + H(+) = [pyruvate, water dikinase] + diphosphate. Functionally, bifunctional serine/threonine kinase and phosphorylase involved in the regulation of the phosphoenolpyruvate synthase (PEPS) by catalyzing its phosphorylation/dephosphorylation. The protein is Putative phosphoenolpyruvate synthase regulatory protein of Shewanella amazonensis (strain ATCC BAA-1098 / SB2B).